We begin with the raw amino-acid sequence, 214 residues long: Thymidylate kinase (214 aa).

7–14 (GIDGAGKS) lines the ATP pocket.

The protein belongs to the thymidylate kinase family.

The catalysed reaction is dTMP + ATP = dTDP + ADP. In terms of biological role, phosphorylation of dTMP to form dTDP in both de novo and salvage pathways of dTTP synthesis. This is Thymidylate kinase from Chlorobium luteolum (strain DSM 273 / BCRC 81028 / 2530) (Pelodictyon luteolum).